A 70-amino-acid chain; its full sequence is Probable non-specific lipid-transfer protein 2 (70 aa).

Disulfide bonds link Cys-4-Cys-38, Cys-12-Cys-26, Cys-27-Cys-62, and Cys-36-Cys-69.

Its function is as follows. Potential phospholipid transfer protein. In Zea mays (Maize), this protein is Probable non-specific lipid-transfer protein 2.